Reading from the N-terminus, the 228-residue chain is LexA repressor (228 aa).

A DNA-binding region (H-T-H motif) is located at residues 28 to 48 (IREIGEALDIRSTNGVNDHLK). Active-site for autocatalytic cleavage activity residues include S146 and K183.

This sequence belongs to the peptidase S24 family. In terms of assembly, homodimer.

It catalyses the reaction Hydrolysis of Ala-|-Gly bond in repressor LexA.. Represses a number of genes involved in the response to DNA damage (SOS response), including recA and lexA. In the presence of single-stranded DNA, RecA interacts with LexA causing an autocatalytic cleavage which disrupts the DNA-binding part of LexA, leading to derepression of the SOS regulon and eventually DNA repair. This chain is LexA repressor, found in Anaeromyxobacter dehalogenans (strain 2CP-1 / ATCC BAA-258).